Reading from the N-terminus, the 422-residue chain is uncharacterized protein (422 aa).

Positions 1-23 (MLSLIPFTVCAFLALITSKGGSA) are cleaved as a signal peptide.

As to expression, component of the acid-insoluble organic matrix of the aragonitic skeleton (at protein level).

It localises to the secreted. This is an uncharacterized protein from Acropora millepora (Staghorn coral).